Here is a 615-residue protein sequence, read N- to C-terminus: Mitogen-activated protein kinase 18 (615 aa).

Residues 25 to 316 (YRILEVIGKG…PAEALADPYF (292 aa)) form the Protein kinase domain. ATP is bound by residues 31–39 (IGKGSYGVV) and Lys54. The active-site Proton acceptor is the Asp151. Thr187 is subject to Phosphothreonine. The TXY motif lies at 187–189 (TDY). A Phosphotyrosine modification is found at Tyr189. Thr192 is modified (phosphothreonine). Disordered regions lie at residues 414–483 (RSTV…ESSV) and 510–544 (NTMTNPENRNIEASSFPPKPQNPVHQFSPTEPPAA). A compositionally biased stretch (low complexity) spans 415-426 (STVHSTVVHSTS). The span at 445–459 (NGASSAGHPSTSAYP) shows a compositional bias: polar residues. A compositionally biased stretch (pro residues) spans 464–473 (GPPPRVPPSG). 2 stretches are compositionally biased toward polar residues: residues 510-522 (NTMTNPENRNIEA) and 532-544 (PVHQFSPTEPPAA).

The protein belongs to the protein kinase superfamily. CMGC Ser/Thr protein kinase family. MAP kinase subfamily. In terms of assembly, interacts with PHS1. Binds to MAPKKK20. Dually phosphorylated on Thr-187 and Tyr-189, which activates the enzyme. Phosphorylated by MAPKKK20. As to expression, expressed in roots, seedlings, leaves, flower buds, flowers and siliques.

It is found in the nucleus. Its subcellular location is the cytoplasm. It catalyses the reaction L-seryl-[protein] + ATP = O-phospho-L-seryl-[protein] + ADP + H(+). The enzyme catalyses L-threonyl-[protein] + ATP = O-phospho-L-threonyl-[protein] + ADP + H(+). With respect to regulation, activated by threonine and tyrosine phosphorylation. Inactivated by phosphatase PHS1. In terms of biological role, mitogen-activated protein kinase (MAPK) that is specifically regulated by PHS1 and MAPKKK20 and mediates signaling that regulates cortical microtubule functions, maybe through regulation of microtubule dynamic instability. This chain is Mitogen-activated protein kinase 18, found in Arabidopsis thaliana (Mouse-ear cress).